The chain runs to 224 residues: UPF0758 protein PD_0117 (224 aa).

The MPN domain maps to 102–224; that stretch reads SIHDPISAGR…PVSFAEHGWL (123 aa). Residues histidine 173, histidine 175, and aspartate 186 each coordinate Zn(2+). A JAMM motif motif is present at residues 173-186; the sequence is HNHPSGNREPSPAD.

Belongs to the UPF0758 family.

The chain is UPF0758 protein PD_0117 from Xylella fastidiosa (strain Temecula1 / ATCC 700964).